The following is a 463-amino-acid chain: L-seryl-tRNA(Sec) selenium transferase (463 aa).

An N6-(pyridoxal phosphate)lysine modification is found at lysine 295.

This sequence belongs to the SelA family. In terms of assembly, homodecamer; pentamer of dimers. Binds only one seryl-tRNA(Sec) per dimer. Pyridoxal 5'-phosphate is required as a cofactor.

It localises to the cytoplasm. It carries out the reaction L-seryl-tRNA(Sec) + selenophosphate + H(+) = L-selenocysteinyl-tRNA(Sec) + phosphate. It functions in the pathway aminoacyl-tRNA biosynthesis; selenocysteinyl-tRNA(Sec) biosynthesis; selenocysteinyl-tRNA(Sec) from L-seryl-tRNA(Sec) (bacterial route): step 1/1. Converts seryl-tRNA(Sec) to selenocysteinyl-tRNA(Sec) required for selenoprotein biosynthesis. In Shigella sonnei (strain Ss046), this protein is L-seryl-tRNA(Sec) selenium transferase.